The primary structure comprises 391 residues: Processive diacylglycerol beta-glucosyltransferase (391 aa).

This sequence belongs to the glycosyltransferase 28 family. UgtP subfamily.

It localises to the cell membrane. It catalyses the reaction a 1,2-diacyl-3-O-(beta-D-glucopyranosyl)-sn-glycerol + UDP-alpha-D-glucose = a 1,2-diacyl-3-O-(beta-D-Glc-(1-&gt;6)-beta-D-Glc)-sn-glycerol + UDP + H(+). It carries out the reaction a 1,2-diacyl-sn-glycerol + UDP-alpha-D-glucose = a 1,2-diacyl-3-O-(beta-D-glucopyranosyl)-sn-glycerol + UDP + H(+). The protein operates within glycolipid metabolism; diglucosyl-diacylglycerol biosynthesis. In terms of biological role, processive glucosyltransferase involved in the biosynthesis of both the bilayer- and non-bilayer-forming membrane glucolipids. Is able to successively transfer two glucosyl residues to diacylglycerol (DAG), thereby catalyzing the formation of beta-monoglucosyl-DAG (3-O-(beta-D-glucopyranosyl)-1,2-diacyl-sn-glycerol) and beta-diglucosyl-DAG (3-O-(beta-D-glucopyranosyl-beta-(1-&gt;6)-D-glucopyranosyl)-1,2-diacyl-sn-glycerol). Beta-diglucosyl-DAG is the predominant glycolipid found in Bacillales and is also used as a membrane anchor for lipoteichoic acid (LTA). This is Processive diacylglycerol beta-glucosyltransferase from Staphylococcus saprophyticus subsp. saprophyticus (strain ATCC 15305 / DSM 20229 / NCIMB 8711 / NCTC 7292 / S-41).